The primary structure comprises 324 residues: tRNA U34 carboxymethyltransferase (324 aa).

Carboxy-S-adenosyl-L-methionine is bound by residues Lys91, Trp105, Lys110, Gly130, 152–154 (DPS), 181–182 (IE), Met196, Tyr200, and Arg315.

It belongs to the class I-like SAM-binding methyltransferase superfamily. CmoB family. In terms of assembly, homotetramer.

It catalyses the reaction carboxy-S-adenosyl-L-methionine + 5-hydroxyuridine(34) in tRNA = 5-carboxymethoxyuridine(34) in tRNA + S-adenosyl-L-homocysteine + H(+). Functionally, catalyzes carboxymethyl transfer from carboxy-S-adenosyl-L-methionine (Cx-SAM) to 5-hydroxyuridine (ho5U) to form 5-carboxymethoxyuridine (cmo5U) at position 34 in tRNAs. This is tRNA U34 carboxymethyltransferase from Photobacterium profundum (strain SS9).